The primary structure comprises 142 residues: Neuritin (142 aa).

Positions 1 to 27 (MGLKLNGRYISLILAVQIAYLVQAVRA) are cleaved as a signal peptide. Residue Gly-116 is the site of GPI-anchor amidated glycine attachment. The propeptide at 117–142 (AAGSLLPAFPVLLVSLSAALATWLSF) is removed in mature form.

It belongs to the neuritin family. In terms of assembly, component of the outer core of AMPAR complex. AMPAR complex consists of an inner core made of 4 pore-forming GluA/GRIA proteins (GRIA1, GRIA2, GRIA3 and GRIA4) and 4 major auxiliary subunits arranged in a twofold symmetry. One of the two pairs of distinct binding sites is occupied either by CNIH2, CNIH3 or CACNG2, CACNG3. The other harbors CACNG2, CACNG3, CACNG4, CACNG8 or GSG1L. This inner core of AMPAR complex is complemented by outer core constituents binding directly to the GluA/GRIA proteins at sites distinct from the interaction sites of the inner core constituents. Outer core constituents include at least PRRT1, PRRT2, CKAMP44/SHISA9, FRRS1L and NRN1. The proteins of the inner and outer core serve as a platform for other, more peripherally associated AMPAR constituents. Alone or in combination, these auxiliary subunits control the gating and pharmacology of the AMPAR complex and profoundly impact their biogenesis and protein processing.

Its subcellular location is the cell membrane. It is found in the synapse. In terms of biological role, promotes neurite outgrowth and especially branching of neuritic processes in primary hippocampal and cortical cells. This chain is Neuritin (NRN1), found in Homo sapiens (Human).